Here is a 277-residue protein sequence, read N- to C-terminus: Large ribosomal subunit protein uL2 (277 aa).

Positions 222 to 277 (GSVMNPNDHPHGGGEGKSPVGHPGPLTPWGKPALGLKTRKNKKYSDKFIIKRKNKK) are disordered.

It belongs to the universal ribosomal protein uL2 family. In terms of assembly, part of the 50S ribosomal subunit. Forms a bridge to the 30S subunit in the 70S ribosome.

Its function is as follows. One of the primary rRNA binding proteins. Required for association of the 30S and 50S subunits to form the 70S ribosome, for tRNA binding and peptide bond formation. It has been suggested to have peptidyltransferase activity; this is somewhat controversial. Makes several contacts with the 16S rRNA in the 70S ribosome. This chain is Large ribosomal subunit protein uL2, found in Clostridium kluyveri (strain NBRC 12016).